The primary structure comprises 53 residues: uncharacterized protein (53 aa).

Residues 20–42 (ILFPVLLVFDTILIVVGIALILF) form a helical membrane-spanning segment.

It is found in the membrane. This is an uncharacterized protein from Archaeoglobus fulgidus (strain ATCC 49558 / DSM 4304 / JCM 9628 / NBRC 100126 / VC-16).